We begin with the raw amino-acid sequence, 519 residues long: Light-independent protochlorophyllide reductase subunit B (519 aa).

Residue aspartate 36 coordinates [4Fe-4S] cluster. The active-site Proton donor is the aspartate 274. 409–410 provides a ligand contact to substrate; the sequence is GL. The interval 426-465 is disordered; that stretch reads DEAGPSHHGGHSPKPSEAARTPDKVEERADPAPEAPQTGS. Positions 445-456 are enriched in basic and acidic residues; sequence RTPDKVEERADP.

Belongs to the ChlB/BchB/BchZ family. Protochlorophyllide reductase is composed of three subunits; BchL, BchN and BchB. Forms a heterotetramer of two BchB and two BchN subunits. Requires [4Fe-4S] cluster as cofactor.

It carries out the reaction chlorophyllide a + oxidized 2[4Fe-4S]-[ferredoxin] + 2 ADP + 2 phosphate = protochlorophyllide a + reduced 2[4Fe-4S]-[ferredoxin] + 2 ATP + 2 H2O. It participates in porphyrin-containing compound metabolism; bacteriochlorophyll biosynthesis (light-independent). Its function is as follows. Component of the dark-operative protochlorophyllide reductase (DPOR) that uses Mg-ATP and reduced ferredoxin to reduce ring D of protochlorophyllide (Pchlide) to form chlorophyllide a (Chlide). This reaction is light-independent. The NB-protein (BchN-BchB) is the catalytic component of the complex. The protein is Light-independent protochlorophyllide reductase subunit B of Jannaschia sp. (strain CCS1).